The following is a 442-amino-acid chain: tRNA modification GTPase MnmE (442 aa).

(6S)-5-formyl-5,6,7,8-tetrahydrofolate contacts are provided by Arg-23, Glu-82, and Lys-121. The TrmE-type G domain maps to 215-364; sequence GTSLILAGKP…VKQALIQWMQ (150 aa). Residue Asn-225 coordinates K(+). GTP contacts are provided by residues 225–230, 244–250, 269–272, and 325–328; these read NVGKSS, THIPGTT, DTAG, and NKAD. Mg(2+) is bound at residue Ser-229. 3 residues coordinate K(+): Thr-244, Ile-246, and Thr-249. Thr-250 is a Mg(2+) binding site. Residue Lys-442 participates in (6S)-5-formyl-5,6,7,8-tetrahydrofolate binding.

Belongs to the TRAFAC class TrmE-Era-EngA-EngB-Septin-like GTPase superfamily. TrmE GTPase family. Homodimer. Heterotetramer of two MnmE and two MnmG subunits. K(+) serves as cofactor.

It is found in the cytoplasm. Functionally, exhibits a very high intrinsic GTPase hydrolysis rate. Involved in the addition of a carboxymethylaminomethyl (cmnm) group at the wobble position (U34) of certain tRNAs, forming tRNA-cmnm(5)s(2)U34. This Chlamydia pneumoniae (Chlamydophila pneumoniae) protein is tRNA modification GTPase MnmE.